The following is a 482-amino-acid chain: [Fructose-bisphosphate aldolase]-lysine N-methyltransferase, chloroplastic (482 aa).

A chloroplast-targeting transit peptide spans 1 to 57 (MSASVAVVSGFLRIPSIQKSQNPSFLFSRPKKSLVRPISASSSELPENVRNFWKWLR). An SET domain is found at 59-282 (QGVVSGKSVA…AGEQVYIQYD (224 aa)). Residues 75 to 77 (EGL) and Arg-217 each bind S-adenosyl-L-methionine. Residues Arg-217, Arg-221, and Asp-234 each contribute to the substrate site. 237–238 (NH) serves as a coordination point for S-adenosyl-L-methionine. Substrate-binding residues include Tyr-249, Tyr-281, and Tyr-294.

The protein belongs to the class V-like SAM-binding methyltransferase superfamily. Plant protein-lysine LSMT methyltransferase family.

It localises to the plastid. The protein localises to the chloroplast stroma. The catalysed reaction is [fructose-bisphosphate aldolase]-L-lysine + 3 S-adenosyl-L-methionine = [fructose-bisphosphate aldolase]-N(6),N(6),N(6)-trimethyl-L-lysine + 3 S-adenosyl-L-homocysteine + 3 H(+). Functionally, protein-lysine methyltransferase methylating chloroplastic fructose 1,6-bisphosphate aldolases. Can also use with low efficiency gamma-tocopherol methyltransferase as substrate, but not a cytosolic aldolase. Able to interact with unmethylated Rubisco, but unlike in pea, the complex is catalytically unproductive. This Arabidopsis thaliana (Mouse-ear cress) protein is [Fructose-bisphosphate aldolase]-lysine N-methyltransferase, chloroplastic (LSMT-L).